Here is a 262-residue protein sequence, read N- to C-terminus: Acyl-[acyl-carrier-protein]--UDP-N-acetylglucosamine O-acyltransferase (262 aa).

The protein belongs to the transferase hexapeptide repeat family. LpxA subfamily. As to quaternary structure, homotrimer.

The protein localises to the cytoplasm. The catalysed reaction is a (3R)-hydroxyacyl-[ACP] + UDP-N-acetyl-alpha-D-glucosamine = a UDP-3-O-[(3R)-3-hydroxyacyl]-N-acetyl-alpha-D-glucosamine + holo-[ACP]. The protein operates within glycolipid biosynthesis; lipid IV(A) biosynthesis; lipid IV(A) from (3R)-3-hydroxytetradecanoyl-[acyl-carrier-protein] and UDP-N-acetyl-alpha-D-glucosamine: step 1/6. In terms of biological role, involved in the biosynthesis of lipid A, a phosphorylated glycolipid that anchors the lipopolysaccharide to the outer membrane of the cell. This is Acyl-[acyl-carrier-protein]--UDP-N-acetylglucosamine O-acyltransferase from Janthinobacterium sp. (strain Marseille) (Minibacterium massiliensis).